The following is a 378-amino-acid chain: Galanin receptor 2b (378 aa).

The Extracellular segment spans residues 1–30 (MSDHEDLNKAMGHWNASESYQLNPASVIVS). The chain crosses the membrane as a helical span at residues 31–51 (VVFSLIFLLGTIGNSLVLAVL). Residues 52 to 62 (LRSGQVGYNTT) lie on the Cytoplasmic side of the membrane. Residues 63–83 (NLFILNLSVADFFFIIFCVPF) form a helical membrane-spanning segment. Residues 84 to 101 (QATIYSLEGWVFGSFMCK) lie on the Extracellular side of the membrane. A disulfide bond links Cys-100 and Cys-177. Residues 102 to 123 (VVHFFINLTMYASSFTLAAVSV) traverse the membrane as a helical segment. Topologically, residues 124–143 (DRYLAIRYPLRSRELRTPCN) are cytoplasmic. A helical membrane pass occupies residues 144-164 (AVVAMVVIWGLSLVFAGPYLS). Topologically, residues 165–187 (YYDLIDFENSNVCVPGWEEHNRK) are extracellular. Residues 188–208 (VLDTCTFVFGYVIPVLIVSLS) form a helical membrane-spanning segment. The Cytoplasmic segment spans residues 209–238 (YTRTIKYLWTAVDPLDGMSESKRAKRKVTK). A helical membrane pass occupies residues 239-259 (MIIIVTVLFCICWLPYHVVIL). The Extracellular portion of the chain corresponds to 260 to 276 (CYLYGDFPFNQTTYAFR). A helical membrane pass occupies residues 277–297 (LLSHCMAYANSCLNPIVYALV). Residues 298–378 (SKHFRKGFKK…TITLPFQNQP (81 aa)) are Cytoplasmic-facing. The segment at 339–362 (EVSQMNEENARQNESEMVNRPLAQ) is disordered.

The protein belongs to the G-protein coupled receptor 1 family. As to expression, expressed in neurons in the ventral area of the interpeduncular nucleus (IPN) where expression often overlaps with spx1.

Its subcellular location is the membrane. Functionally, receptor for the hormone galanin. Receptor for the hormones spexin-1 and spexin-2. The sequence is that of Galanin receptor 2b from Danio rerio (Zebrafish).